The chain runs to 409 residues: Sperm equatorial segment protein 1 (409 aa).

The N-terminal stretch at 1–18 (MKPVVLVALLWLWPSSFL) is a signal peptide. N-linked (GlcNAc...) asparagine glycosylation is present at Asn132. Residues 141 to 223 (EPYIEKEPEP…TTNTQGTPNT (83 aa)) form a disordered region. Residues 167–177 (PEPEPESESAP) are compositionally biased toward acidic residues. Positions 198–208 (NKVRTGTSRMS) are enriched in polar residues. Over residues 209–223 (TVITQTTNTQGTPNT) the composition is skewed to low complexity.

It belongs to the SPESP1 family. Post-translationally, glycosylated. In testis there are two predominant forms of 77- and 67-kDa and a form of 47-kDa, whereas in epididymal sperm from caput, corpus, and cauda there are two forms of 47- and 43-kDa. Testis forms contain complex carbohydrate residues. Epididymal sperm forms are N-glycosylated. Then undergoes significant glycosylation in the testis and that the majority of these glycoconjugates are removed by the time sperm reach the caput epididymis.

Its subcellular location is the cytoplasmic vesicle. It is found in the secretory vesicle. The protein resides in the acrosome. Functionally, involved in fertilization ability of sperm. This is Sperm equatorial segment protein 1 from Rattus norvegicus (Rat).